Consider the following 45-residue polypeptide: Photosystem II reaction center protein K (45 aa).

A propeptide spanning residues 1-8 is cleaved from the precursor; that stretch reads MDFALLLA. Residues 24-44 traverse the membrane as a helical segment; sequence LPLIPLFFLLLAFVWQAAVGF.

This sequence belongs to the PsbK family. PSII is composed of 1 copy each of membrane proteins PsbA, PsbB, PsbC, PsbD, PsbE, PsbF, PsbH, PsbI, PsbJ, PsbK, PsbL, PsbM, PsbT, PsbX, PsbY, PsbZ, Psb30/Ycf12, peripheral proteins PsbO, CyanoQ (PsbQ), PsbU, PsbV and a large number of cofactors. It forms dimeric complexes.

The protein localises to the cellular thylakoid membrane. Functionally, one of the components of the core complex of photosystem II (PSII). PSII is a light-driven water:plastoquinone oxidoreductase that uses light energy to abstract electrons from H(2)O, generating O(2) and a proton gradient subsequently used for ATP formation. It consists of a core antenna complex that captures photons, and an electron transfer chain that converts photonic excitation into a charge separation. This is Photosystem II reaction center protein K from Gloeothece citriformis (strain PCC 7424) (Cyanothece sp. (strain PCC 7424)).